Reading from the N-terminus, the 601-residue chain is Glutathione-regulated potassium-efflux system protein KefB (601 aa).

A run of 13 helical transmembrane segments spans residues 4–24, 29–49, 55–75, 87–107, 111–131, 152–172, 177–197, 207–227, 230–250, 262–282, 284–304, 324–344, and 356–376; these read ADLL…VPLA, IGAV…GLGF, EILH…GLEL, IFGV…GLLM, FLWQ…TAMA, VLLF…LLAG, HFDW…LIGG, FIAA…LVLS, LFMD…GVLL, AIDP…GMSL, LGVL…LVVI, MQFA…FSTA, and ALLL…MKGI. In terms of domain architecture, RCK N-terminal spans 400–519; the sequence is KPQVIVVGFG…AGVTQFSRET (120 aa).

It belongs to the monovalent cation:proton antiporter 2 (CPA2) transporter (TC 2.A.37) family. KefB subfamily. In terms of assembly, interacts with the regulatory subunit KefG.

The protein resides in the cell inner membrane. Functionally, pore-forming subunit of a potassium efflux system that confers protection against electrophiles. Catalyzes K(+)/H(+) antiport. The chain is Glutathione-regulated potassium-efflux system protein KefB from Salmonella paratyphi B (strain ATCC BAA-1250 / SPB7).